A 228-amino-acid chain; its full sequence is CMRF-35-like molecule 4 (228 aa).

Positions 1–24 are cleaved as a signal peptide; it reads MIPRVIRLWLPSALFLSQVPGCVP. Residues 25–126 form the Ig-like V-type domain; that stretch reads LHGPSTITGA…FDGSLGFDKY (102 aa). The Extracellular portion of the chain corresponds to 25-187; that stretch reads LHGPSTITGA…QPRSLRSSLY (163 aa). Residues Cys-43 and Cys-110 are joined by a disulfide bond. N-linked (GlcNAc...) asparagine glycosylation is present at Asn-90. The tract at residues 139–174 is disordered; that stretch reads PVTGSSLESGRDILESPTSSVGHTHPSVTTDDTIPA. Residues 154-170 show a composition bias toward polar residues; that stretch reads SPTSSVGHTHPSVTTDD. A helical transmembrane segment spans residues 188–208; that stretch reads FWVLVSLKLFLFLSMLGAVLW. Residues 209 to 228 are Cytoplasmic-facing; it reads VNRPQRCSGGSSSRPCYENQ.

This sequence belongs to the CD300 family. Interacts with TYROBP, HCST and FcR gamma. As to expression, present on the surface of mast cells, dendritic cells, peritoneal macrophages and a subset of B-cells (at protein level).

The protein resides in the cell membrane. Acts as an activating receptor in mast cells and macrophages. The sequence is that of CMRF-35-like molecule 4 from Mus musculus (Mouse).